Reading from the N-terminus, the 248-residue chain is Aspartate/glutamate leucyltransferase (248 aa).

This sequence belongs to the R-transferase family. Bpt subfamily.

The protein resides in the cytoplasm. It catalyses the reaction N-terminal L-glutamyl-[protein] + L-leucyl-tRNA(Leu) = N-terminal L-leucyl-L-glutamyl-[protein] + tRNA(Leu) + H(+). The catalysed reaction is N-terminal L-aspartyl-[protein] + L-leucyl-tRNA(Leu) = N-terminal L-leucyl-L-aspartyl-[protein] + tRNA(Leu) + H(+). Functions in the N-end rule pathway of protein degradation where it conjugates Leu from its aminoacyl-tRNA to the N-termini of proteins containing an N-terminal aspartate or glutamate. This chain is Aspartate/glutamate leucyltransferase, found in Methylobacillus flagellatus (strain ATCC 51484 / DSM 6875 / VKM B-1610 / KT).